We begin with the raw amino-acid sequence, 382 residues long: Putative phospholipase A1 (382 aa).

A signal peptide spans methionine 1–alanine 27. Topologically, residues phenylalanine 28–glutamine 65 are periplasmic. A beta stranded membrane pass occupies residues glutamate 66–arginine 78. Residues serine 79–arginine 168 are Extracellular-facing. The beta stranded transmembrane segment at alanine 169 to glutamate 183 threads the bilayer. Topologically, residues aspartate 184 to arginine 189 are periplasmic. The beta stranded transmembrane segment at alanine 190–tryptophan 202 threads the bilayer. Over glutamine 203–proline 213 the chain is Extracellular. Serine 211 contributes to the Ca(2+) binding site. Residues phenylalanine 214–leucine 233 traverse the membrane as a beta stranded segment. Topologically, residues proline 234 to glycine 236 are periplasmic. A beta stranded transmembrane segment spans residues glycine 237–serine 250. Histidine 248 (proton acceptor) is an active-site residue. Residue serine 250 is the Nucleophile of the active site. Over asparagine 251–arginine 259 the chain is Extracellular. Residue serine 258 participates in Ca(2+) binding. A beta stranded transmembrane segment spans residues serine 260–tryptophan 272. Over glycine 273–lysine 274 the chain is Periplasmic. The chain crosses the membrane as a beta stranded span at residues leucine 275–arginine 284. At alanine 285–aspartate 306 the chain is on the extracellular side. Residue aspartate 294 participates in Ca(2+) binding. The beta stranded transmembrane segment at valine 307–leucine 313 threads the bilayer. The Periplasmic segment spans residues asparagine 314 to aspartate 315. The chain crosses the membrane as a beta stranded span at residues arginine 316–tyrosine 325. At asparagine 326 to glycine 332 the chain is on the extracellular side. Residues alanine 333–proline 341 traverse the membrane as a beta stranded segment. The Periplasmic portion of the chain corresponds to isoleucine 342–leucine 346. Residues lysine 347–tyrosine 356 traverse the membrane as a beta stranded segment. Topologically, residues glycine 357–histidine 365 are extracellular. Residues lysine 366 to asparagine 377 traverse the membrane as a beta stranded segment. Over aspartate 378–isoleucine 382 the chain is Periplasmic.

It belongs to the phospholipase A1 family. In terms of assembly, homodimer; dimerization is reversible, and the dimeric form is the active one. Requires Ca(2+) as cofactor.

Its subcellular location is the cell outer membrane. It carries out the reaction a 1,2-diacyl-sn-glycero-3-phosphocholine + H2O = a 2-acyl-sn-glycero-3-phosphocholine + a fatty acid + H(+). The catalysed reaction is a 1,2-diacyl-sn-glycero-3-phosphocholine + H2O = a 1-acyl-sn-glycero-3-phosphocholine + a fatty acid + H(+). Hydrolysis of phosphatidylcholine with phospholipase A2 (EC 3.1.1.4) and phospholipase A1 (EC 3.1.1.32) activities. The sequence is that of Putative phospholipase A1 from Neisseria meningitidis serogroup B (strain ATCC BAA-335 / MC58).